The chain runs to 318 residues: MTVITIAKRGLPKLTTSTSSTTTASSSSTITSVXSSSSSLPLLSNSTSSSIIPSITPPSRNGNPYILDSGDMPNGTVFIVVGGIAGVIFLAILLWWVITTYSSHRLTRSVQDYESKMFSXQHTQFYGDSPYMDYPAKENFQDQVHISESDISPGNKDESVKDALVSHTNNEKPFLSNFERPLSSLVSESNRNSLFISPTGDILYKTRLSKLYQESPRLLQKPVIMTSDNVSTNSLVSTISSSSASSLDNGNEKEVGEDIRKPAKIASSPSRKLLNSPESDGSVNRNHSKGNLLVVQSKRKPTPSTYLEHMLEGKEQDE.

The tract at residues 15–56 (TTSTSSTTTASSSSTITSVXSSSSSLPLLSNSTSSSIIPSIT) is disordered. The chain crosses the membrane as a helical span at residues 78-98 (FIVVGGIAGVIFLAILLWWVI). Serine 129 carries the phosphoserine modification. The span at 238-247 (TISSSSASSL) shows a compositional bias: low complexity. Positions 238–318 (TISSSSASSL…HMLEGKEQDE (81 aa)) are disordered. The span at 250-261 (GNEKEVGEDIRK) shows a compositional bias: basic and acidic residues. Residues 276 to 285 (SPESDGSVNR) are compositionally biased toward polar residues. A phosphoserine mark is found at serine 279, serine 282, and serine 288. Residues 309 to 318 (HMLEGKEQDE) show a composition bias toward basic and acidic residues. Lysine 314 is covalently cross-linked (Glycyl lysine isopeptide (Lys-Gly) (interchain with G-Cter in ubiquitin)).

This sequence belongs to the PRM5 family.

It localises to the membrane. The chain is Pheromone-regulated membrane protein 5 (PRM5) from Saccharomyces cerevisiae (strain Lalvin QA23) (Baker's yeast).